Here is a 465-residue protein sequence, read N- to C-terminus: Cytochrome P450 85A2 (465 aa).

Residues 2 to 22 (GIMMMILGLLVIIVCLCTALL) form a helical membrane-spanning segment. Residue C415 coordinates heme. C462 carries S-farnesyl cysteine lipidation. The Farnesylation CAAX motif motif lies at 462 to 465 (CSPY).

Belongs to the cytochrome P450 family. Heme is required as a cofactor. In terms of processing, isoprenylated (farnesylated); this addition of a 15-carbon farnesyl isoprenoid to the carboxy terminus is required for endoplasmic reticulum localization and essential for the biosynthesis of brassinolide. As to expression, expressed in stems, hypocotyls, leaves, siliques, shoots, and roots, with a higher expression in apical shoots.

It localises to the membrane. The protein localises to the endoplasmic reticulum. The enzyme catalyses 6-deoxoteasterone + reduced [NADPH--hemoprotein reductase] + O2 = 6alpha-hydroxyteasterone + oxidized [NADPH--hemoprotein reductase] + H2O + H(+). The catalysed reaction is 6alpha-hydroxytyphasterol + reduced [NADPH--hemoprotein reductase] + O2 = teasterone + oxidized [NADPH--hemoprotein reductase] + 2 H2O + H(+). It catalyses the reaction 3-dehydro-6-deoxoteasterone + reduced [NADPH--hemoprotein reductase] + O2 = 3-dehydro-6alpha-hydroxyteasterone + oxidized [NADPH--hemoprotein reductase] + H2O + H(+). It carries out the reaction 3-dehydro-6alpha-hydroxyteasterone + reduced [NADPH--hemoprotein reductase] + O2 = 3-dehydroteasterone + oxidized [NADPH--hemoprotein reductase] + 2 H2O + H(+). The enzyme catalyses 6-deoxotyphasterol + reduced [NADPH--hemoprotein reductase] + O2 = 6alpha-hydroxytyphasterol + oxidized [NADPH--hemoprotein reductase] + H2O + H(+). The catalysed reaction is 6alpha-hydroxytyphasterol + reduced [NADPH--hemoprotein reductase] + O2 = typhasterol + oxidized [NADPH--hemoprotein reductase] + 2 H2O + H(+). It catalyses the reaction 6-deoxocastasterone + reduced [NADPH--hemoprotein reductase] + O2 = 6alpha-hydroxycastasterone + oxidized [NADPH--hemoprotein reductase] + H2O + H(+). It carries out the reaction 6alpha-hydroxycastasterone + reduced [NADPH--hemoprotein reductase] + O2 = castasterone + oxidized [NADPH--hemoprotein reductase] + 2 H2O + H(+). The enzyme catalyses 6-deoxo-28-norteasterone + 2 reduced [NADPH--hemoprotein reductase] + 2 O2 = 28-norteasterone + 2 oxidized [NADPH--hemoprotein reductase] + 3 H2O + 2 H(+). The catalysed reaction is 6-deoxo-28-norteasterone + reduced [NADPH--hemoprotein reductase] + O2 = 6alpha-hydroxy-28-norteasterone + oxidized [NADPH--hemoprotein reductase] + H2O + H(+). It catalyses the reaction 6alpha-hydroxy-28-norteasterone + reduced [NADPH--hemoprotein reductase] + O2 = 28-norteasterone + oxidized [NADPH--hemoprotein reductase] + 2 H2O + H(+). It carries out the reaction 6-deoxo-28-nortyphasterol + 2 reduced [NADPH--hemoprotein reductase] + 2 O2 = 28-nortyphasterol + 2 oxidized [NADPH--hemoprotein reductase] + 3 H2O + 2 H(+). The enzyme catalyses 6-deoxo-28-nortyphasterol + reduced [NADPH--hemoprotein reductase] + O2 = 6alpha-hydroxy-28-nortyphasterol + oxidized [NADPH--hemoprotein reductase] + H2O + H(+). The catalysed reaction is 6alpha-hydroxy-28-nortyphasterol + reduced [NADPH--hemoprotein reductase] + O2 = 28-nortyphasterol + oxidized [NADPH--hemoprotein reductase] + 2 H2O + H(+). It catalyses the reaction 6-deoxo-28-norcastasterone + 2 reduced [NADPH--hemoprotein reductase] + 2 O2 = 28-norcastasterone + 2 oxidized [NADPH--hemoprotein reductase] + 3 H2O + 2 H(+). It carries out the reaction 6-deoxo-28-norcastasterone + reduced [NADPH--hemoprotein reductase] + O2 = 6alpha-hydroxy-28-norcastasterone + oxidized [NADPH--hemoprotein reductase] + H2O + H(+). The enzyme catalyses 6alpha-hydroxy-28-norcastasterone + reduced [NADPH--hemoprotein reductase] + O2 = 28-norcastasterone + oxidized [NADPH--hemoprotein reductase] + 2 H2O + H(+). The catalysed reaction is 3-dehydro-6-deoxo-28-norteasterone + 2 reduced [NADPH--hemoprotein reductase] + 2 O2 = 6-dehydro-28-norteasterone + 2 oxidized [NADPH--hemoprotein reductase] + 3 H2O + 2 H(+). It catalyses the reaction 3-dehydro-6-deoxo-28-norteasterone + reduced [NADPH--hemoprotein reductase] + O2 = 3-dehydro-6alpha-hydroxy-28-norteasterone + oxidized [NADPH--hemoprotein reductase] + H2O + H(+). It carries out the reaction 3-dehydro-6alpha-hydroxy-28-norteasterone + reduced [NADPH--hemoprotein reductase] + O2 = 6-dehydro-28-norteasterone + oxidized [NADPH--hemoprotein reductase] + 2 H2O + H(+). The enzyme catalyses teasterone + reduced [NADPH--hemoprotein reductase] + O2 = 7-oxateasterone + oxidized [NADPH--hemoprotein reductase] + H2O + H(+). The catalysed reaction is castasterone + reduced [NADPH--hemoprotein reductase] + O2 = brassinolide + oxidized [NADPH--hemoprotein reductase] + H2O + H(+). It catalyses the reaction typhasterol + reduced [NADPH--hemoprotein reductase] + O2 = 7-oxatyphasterol + oxidized [NADPH--hemoprotein reductase] + H2O + H(+). It carries out the reaction 6-deoxocastasterone + 2 reduced [NADPH--hemoprotein reductase] + 2 O2 = castasterone + 2 oxidized [NADPH--hemoprotein reductase] + 3 H2O + 2 H(+). The enzyme catalyses 6-deoxoteasterone + 2 reduced [NADPH--hemoprotein reductase] + 2 O2 = teasterone + 2 oxidized [NADPH--hemoprotein reductase] + 3 H2O + 2 H(+). The catalysed reaction is 6-deoxotyphasterol + 2 reduced [NADPH--hemoprotein reductase] + 2 O2 = typhasterol + 2 oxidized [NADPH--hemoprotein reductase] + 3 H2O + 2 H(+). It catalyses the reaction 3-dehydro-6-deoxoteasterone + 2 reduced [NADPH--hemoprotein reductase] + 2 O2 = 3-dehydroteasterone + 2 oxidized [NADPH--hemoprotein reductase] + 3 H2O + 2 H(+). Its pathway is plant hormone biosynthesis; brassinosteroid biosynthesis. In terms of biological role, mediates Baeyer-Villiger oxidation and catalyzes the C6-oxidation step and lactonization in brassinosteroids biosynthesis. Converts 6-deoxocastasterone (6-deoxoCS) to castasterone (CS), and castasterone to brassinolide (BL). May also convert 6-deoxoteasterone (6-deoxoTE) to teasterone (TE), 3-dehydro-6-deoxoteasterone (6-deoxo3DT, 6-deoxo-3-DHT) to 3-dehydroteasterone (3DT, 3-DHT), and 6-deoxotyphasterol (6-deoxoTY) to typhasterol (TY). Also seems to be able to convert teasterone (TE) and typhasterol (TY) to 7-oxateasterone (7-OXTE) and 7-oxatyphasterol (7-OXTY), respectively. Catalyzes the conversion of 6-deoxo-28-norteasterone (6-deoxo-28-norTE) to 28-norteasterone (28-norTE), 6-deoxo-28-nordeoxoteasterone (6-deoxo-28-nor-3-DHT) to 28-nordeoxoteasterone (28-nor-3-DHT), 6-deoxo-28-nortyphasterol (6-deoxo-28-norTY) to 28-nortyphasterol (28-norTY) and 6-deoxo-28-norcastasterone (6-deoxo-28-norCS) to 28-norcastasterone (28-norCS). Involved in a negative regulation of responses to abscisic acid (ABA) and drought tolerance. This chain is Cytochrome P450 85A2 (CYP85A2), found in Arabidopsis thaliana (Mouse-ear cress).